The primary structure comprises 523 residues: Ribonuclease Y (523 aa).

The helical transmembrane segment at 28–48 threads the bilayer; the sequence is TYYIVATIIIAVIAVYVDYYI. The region spanning 227–312 is the KH domain; that stretch reads TVYVVNLPND…EMVEKAKKEV (86 aa). The region spanning 353–446 is the HD domain; that stretch reads VLKHSIEVSY…VQAADAISAA (94 aa).

The protein belongs to the RNase Y family.

It localises to the cell membrane. Endoribonuclease that initiates mRNA decay. This chain is Ribonuclease Y, found in Clostridium tetani (strain Massachusetts / E88).